The chain runs to 1229 residues: Chitin synthase 4 (1229 aa).

The interval 1–196 (MSLPERPGAK…IVKEGKRKEK (196 aa)) is disordered. Over 1 to 202 (MSLPERPGAK…RKEKIPEQLR (202 aa)) the chain is Cytoplasmic. Residues 18–27 (SYRKSPSRRN) are compositionally biased toward basic residues. A compositionally biased stretch (polar residues) spans 43–66 (GQHQRGPSVNSFAETIRSPNSNIE). A compositionally biased stretch (basic and acidic residues) spans 92 to 105 (IRPERNRIDRDHPN). The span at 137-150 (SGPPSGSNSASGSG) shows a compositional bias: low complexity. Basic and acidic residues-rich tracts occupy residues 164–177 (SGRE…DNTR) and 187–196 (IVKEGKRKEK). The helical transmembrane segment at 203–223 (PPSAWNVYCAVITFWSPDFIM) threads the bilayer. Topologically, residues 224–240 (KCCGMPAKAQRRAWREK) are extracellular. Residues 241-261 (IGLISLILIIMGVVGFLTFGF) form a helical membrane-spanning segment. Residues 262 to 495 (NQAVCGGPVL…IKVGTVDTDT (234 aa)) are Cytoplasmic-facing. Residues 496-516 (VGCIAAKVVLYVSLALILSVV) form a helical membrane-spanning segment. Residues 517 to 1054 (GARFTLALIF…LCGTFCFSMQ (538 aa)) are Extracellular-facing. Disordered regions lie at residues 539-589 (TSQT…RSSF) and 601-648 (GAER…DPYA). Residues 568–581 (GDVGSSVAGASSSD) are compositionally biased toward low complexity. Asn608, Asn635, and Asn1030 each carry an N-linked (GlcNAc...) asparagine glycan. Residues 608–648 (NKSMPTTMASQASGGYMGPSSTAYRETNESRTSFLKSDPYA) are compositionally biased toward polar residues. Residues 1055–1075 (FVIFIELIGTLVLPAAIAFTF) traverse the membrane as a helical segment. Over 1076-1088 (YVVIISIINQPPQ) the chain is Cytoplasmic. A helical membrane pass occupies residues 1089-1109 (IIPLVLLGLILGLPAILIIIT). Residues 1110-1114 (AHSWS) lie on the Extracellular side of the membrane. The chain crosses the membrane as a helical span at residues 1115–1135 (YVLWMLIYLLSLPVWNFVLPA). Over 1136–1229 (YAFWKFDDFS…QQYDEYYSDA (94 aa)) the chain is Cytoplasmic. The segment at 1210–1229 (WASAPPHHHQQQYDEYYSDA) is disordered.

It belongs to the chitin synthase family. Class IV subfamily.

The protein resides in the cell membrane. The enzyme catalyses [(1-&gt;4)-N-acetyl-beta-D-glucosaminyl](n) + UDP-N-acetyl-alpha-D-glucosamine = [(1-&gt;4)-N-acetyl-beta-D-glucosaminyl](n+1) + UDP + H(+). Polymerizes chitin, a structural polymer of the cell wall and septum, by transferring the sugar moiety of UDP-GlcNAc to the non-reducing end of the growing chitin polymer. Might function as a negative regulator on expression of other CHS genes. This Pyricularia oryzae (strain 70-15 / ATCC MYA-4617 / FGSC 8958) (Rice blast fungus) protein is Chitin synthase 4.